The following is a 428-amino-acid chain: MLKLHEKSGDDTVALMADIGRRARAAARPLAIAPTAAKNAALLAMADAIVARQQDILDANAIDVSNGEEAGLSASFMDRLKLTPARIRAMADGIREIAELKDPVGDVIAAWERPNGLRIERVRTPLGVVGVIYESRPNVTADAGALCLKAGNPVILRGGSDSLNSSAAIHACLVEGLKAAGLPEDAIQLVPTTDRAAVGEMLKGLGGALDVIIPRGGKSLVGRVQSEARVPVFAHLEGICHLYIDRSADLDMAVKIAVNAKMRRTGVCGAAETLLVDRAVASTHLVPILDALRAAGCEIHADQEVLKVFFDAKPATDADWVTEYLDAIIAVKLVDGIGGAIEHIETFSSHHTEAIIAEDPKAVERFFNEIDSAILLHNASTQFADGGEFGMGAEIGIATGKMHARGPVGVEQLTSFKYRVRGSGQVRP.

The protein belongs to the gamma-glutamyl phosphate reductase family.

It localises to the cytoplasm. It carries out the reaction L-glutamate 5-semialdehyde + phosphate + NADP(+) = L-glutamyl 5-phosphate + NADPH + H(+). The protein operates within amino-acid biosynthesis; L-proline biosynthesis; L-glutamate 5-semialdehyde from L-glutamate: step 2/2. Functionally, catalyzes the NADPH-dependent reduction of L-glutamate 5-phosphate into L-glutamate 5-semialdehyde and phosphate. The product spontaneously undergoes cyclization to form 1-pyrroline-5-carboxylate. In Mesorhizobium japonicum (strain LMG 29417 / CECT 9101 / MAFF 303099) (Mesorhizobium loti (strain MAFF 303099)), this protein is Gamma-glutamyl phosphate reductase.